We begin with the raw amino-acid sequence, 98 residues long: ESAT-6-like protein EsxM (98 aa).

It belongs to the WXG100 family. CFP-10 subfamily.

Its subcellular location is the secreted. Alters the host macrophage cytoskeleton and enhances macrophage motility. Promotes granuloma efflux, extrapulmonary dissemination of infection and bone disease. This Mycobacterium marinum (strain ATCC BAA-535 / M) protein is ESAT-6-like protein EsxM.